The chain runs to 623 residues: Stretch-activated cation channel MID1 (623 aa).

The Extracellular portion of the chain corresponds to 1-57 (MPAREVYLKRPATRRQLEGICTRYDGQQRITQLDCEEGCSKRTQPPQRLNPRYKSPD). The chain crosses the membrane as a helical span at residues 58–78 (LIHISFIIVLLCILSMTSSVV). The Cytoplasmic portion of the chain corresponds to 79 to 623 (AQTTTGSSSS…DRWGNRWCNG (545 aa)). A compositionally biased stretch (low complexity) spans 524–536 (TSTSSGTFPTPST). The tract at residues 524–544 (TSTSSGTFPTPSTVLRTPSSP) is disordered. Residues 600 to 623 (SYGDGSAAQGVAAQDRWGNRWCNG) are required for targeting to the cell membrane.

As to quaternary structure, forms an oligomer by disulfide bonds. Interacts with CCH1 to form a Ca(2+) influx channel. Interacts (via C-terminus) with CCP1/cytochrome c peroxidase; the interaction may contribute to cellular detoxification of radicals.

Its subcellular location is the cell membrane. Calcium-permeable, cation-selective stretch-activated channel (SAC) that functions together with CCH1 to mediate calcium entry into cells. May additionally play a role in cellular detoxification of radicals. The chain is Stretch-activated cation channel MID1 from Cryptococcus neoformans var. grubii serotype A (strain H99 / ATCC 208821 / CBS 10515 / FGSC 9487) (Filobasidiella neoformans var. grubii).